Here is a 144-residue protein sequence, read N- to C-terminus: Large ribosomal subunit protein uL11 (144 aa).

This sequence belongs to the universal ribosomal protein uL11 family. In terms of assembly, part of the ribosomal stalk of the 50S ribosomal subunit. Interacts with L10 and the large rRNA to form the base of the stalk. L10 forms an elongated spine to which L12 dimers bind in a sequential fashion forming a multimeric L10(L12)X complex. One or more lysine residues are methylated.

In terms of biological role, forms part of the ribosomal stalk which helps the ribosome interact with GTP-bound translation factors. The protein is Large ribosomal subunit protein uL11 of Deinococcus deserti (strain DSM 17065 / CIP 109153 / LMG 22923 / VCD115).